We begin with the raw amino-acid sequence, 357 residues long: Hsp70-binding protein 1 (357 aa).

The interval 1–68 (MADKGSGGSR…DPPPEPMSEE (68 aa)) is disordered. Gly residues predominate over residues 23–35 (SSGGSGSSAGGSG). 4 ARM repeats span residues 130 to 172 (ENMD…TCSQ), 175 to 215 (AAIQ…CLVR), 218 to 257 (EAGL…NLLV), and 260 to 299 (PEHK…SLVT). 2 positions are modified to phosphoserine: Ser-349 and Ser-354.

As to quaternary structure, interacts with the ATP-binding domain of HSPA1A. Detected in a ternary complex containing STUB1, HSPA1A and HSPBP1. Interacts with PGLYRP1; this interaction blocks the cytotoxic activity of the PGLYRP1-HSPA1A complex.

In terms of biological role, inhibits HSPA1A chaperone activity by changing the conformation of the ATP-binding domain of HSPA1A and interfering with ATP binding. Interferes with ubiquitination mediated by STUB1 and inhibits chaperone-assisted degradation of target proteins. This is Hsp70-binding protein 1 (Hspbp1) from Mus musculus (Mouse).